The chain runs to 255 residues: 2,3-dehydroadipyl-CoA hydratase (255 aa).

This sequence belongs to the enoyl-CoA hydratase/isomerase family.

The catalysed reaction is a (3S)-3-hydroxyacyl-CoA = a (2E)-enoyl-CoA + H2O. It carries out the reaction a 4-saturated-(3S)-3-hydroxyacyl-CoA = a (3E)-enoyl-CoA + H2O. Its pathway is aromatic compound metabolism; phenylacetate degradation. Catalyzes the reversible conversion of enzymatically produced 2,3-dehydroadipyl-CoA into 3-hydroxyadipyl-CoA. The sequence is that of 2,3-dehydroadipyl-CoA hydratase (paaF) from Escherichia coli (strain K12).